We begin with the raw amino-acid sequence, 49 residues long: Large ribosomal subunit protein bL33 (49 aa).

Belongs to the bacterial ribosomal protein bL33 family.

In Desulforudis audaxviator (strain MP104C), this protein is Large ribosomal subunit protein bL33.